The sequence spans 612 residues: Apoptosis-inducing factor 1, mitochondrial (612 aa).

2 short sequence motifs (mitochondrial localization signal) span residues methionine 1–arginine 30 and lysine 62–lysine 88. A mitochondrion-targeting transit peptide spans methionine 1 to alanine 54. A propeptide spans serine 55–leucine 101 (removed in mature form). Lysine 108 is modified (N6-succinyllysine). Serine 115 is subject to Phosphoserine. Positions phenylalanine 133–tryptophan 482 are FAD-dependent oxidoreductase. FAD-binding positions include glycine 137–alanine 141, glutamate 163–aspartate 164, arginine 171, and lysine 176. Tryptophan 195 serves as a coordination point for NAD(+). Position 232 (valine 232) interacts with FAD. Residue lysine 254 forms a Glycyl lysine isopeptide (Lys-Gly) (interchain with G-Cter in ubiquitin) linkage. Serine 267 is modified (phosphoserine). Arginine 284 provides a ligand contact to FAD. NAD(+)-binding positions include glycine 307–leucine 310, glutamate 335, and lysine 341. Serine 370 is modified (phosphoserine). Position 387 is an N6-acetyllysine (lysine 387). Glycine 398 contacts NAD(+). Residue aspartate 437 participates in FAD binding. Positions lysine 445–arginine 450 match the Nuclear localization signal motif. NAD(+)-binding positions include glutamate 452–histidine 453, tryptophan 482, and glutamate 492. Residues histidine 453–histidine 454 and tryptophan 482 each bind FAD. The span at alanine 512–arginine 528 shows a compositional bias: polar residues. The segment at alanine 512–glutamine 551 is disordered. Residue threonine 520 is modified to Phosphothreonine. 2 positions are modified to phosphoserine: serine 523 and serine 529. Asparagine 582 is a binding site for NAD(+). Lysine 592 is modified (N6-acetyllysine).

It belongs to the FAD-dependent oxidoreductase family. Monomer (oxidized form). Homodimer (reduced form). Upon reduction with NADH, undergoes dimerization and forms tight, long-lived FADH2-NAD charge transfer complexes (CTC) resistant to oxidation. Also dimerizes with isoform 3 preventing its release from mitochondria. Interacts with XIAP/BIRC4. Interacts (via N-terminus) with EIF3G (via C-terminus). Interacts with PRELID1. Interacts with CHCHD4; the interaction increases in presence of NADH. Interacts with processed form of PARP1 (Poly [ADP-ribose] polymerase 1, processed C-terminus); interaction is mediated with poly-ADP-ribose chains attached to PARP1, promoting translocation into the nucleus. It depends on FAD as a cofactor. Post-translationally, under normal conditions, a 54-residue N-terminal segment is first proteolytically removed during or just after translocation into the mitochondrial intermembrane space (IMS) by the mitochondrial processing peptidase (MPP) to form the inner-membrane-anchored mature form (AIFmit). During apoptosis, it is further proteolytically processed at amino-acid position 101 leading to the generation of the mature form, which is confined to the mitochondrial IMS in a soluble form (AIFsol). AIFsol is released to the cytoplasm in response to specific death signals, and translocated to the nucleus, where it induces nuclear apoptosis in a caspase-independent manner. In terms of processing, ubiquitination by XIAP/BIRC4 does not lead to proteasomal degradation. Ubiquitination at Lys-254 by XIAP/BIRC4 blocks its ability to bind DNA and induce chromatin degradation, thereby inhibiting its ability to induce cell death. In terms of tissue distribution, expressed in cortical neurons (at protein level). Expressed in liver (at protein level).

It is found in the mitochondrion intermembrane space. It localises to the mitochondrion inner membrane. The protein localises to the cytoplasm. The protein resides in the nucleus. Its subcellular location is the perinuclear region. It is found in the mitochondrion. It localises to the cytosol. It catalyses the reaction A + NADH + H(+) = AH2 + NAD(+). Its function is as follows. Functions both as NADH oxidoreductase and as regulator of apoptosis. In response to apoptotic stimuli, it is released from the mitochondrion intermembrane space into the cytosol and to the nucleus, where it functions as a proapoptotic factor in a caspase-independent pathway. Release into the cytoplasm is mediated upon binding to poly-ADP-ribose chains. The soluble form (AIFsol) found in the nucleus induces 'parthanatos' i.e. caspase-independent fragmentation of chromosomal DNA. Binds to DNA in a sequence-independent manner. Interacts with EIF3G, and thereby inhibits the EIF3 machinery and protein synthesis, and activates caspase-7 to amplify apoptosis. Plays a critical role in caspase-independent, pyknotic cell death in hydrogen peroxide-exposed cells. In contrast, participates in normal mitochondrial metabolism. Plays an important role in the regulation of respiratory chain biogenesis by interacting with CHCHD4 and controlling CHCHD4 mitochondrial import. The sequence is that of Apoptosis-inducing factor 1, mitochondrial from Mus musculus (Mouse).